Reading from the N-terminus, the 662-residue chain is MHLRGCACHLSLYCVYNDWENKIYRVPIFQCLFLEAETRSLKTFLIRGQSLDQESLNEIEVTRKETMLWDLQEQSNMMDKKIAAISNLIMNNGELVRTLSKFFVPLTVVLGDDGLEILEAYVCGEELMLPLDTVPVILRCIGDYAALDTKHLLSNECTQASKKIRFGYSVMDFHFSLTVSDVKICFSHTDTGEAVCEKMKQIFSFSVCAFGGEQVLLVTPKNAYALLFDDDLCLLLLQSVFAFLHEKIFGVYKQVLVQLCEYIGPDLWPFGNERSVSFIGYPNLWLLSVSDLERRVPDTTYICREILSFCGLAPILGPRGRHAVPVVRELSIEMPGSETSLQRFRFNSQYVSSESLCFQTGPEDTHLFFSDSDMYVVTLPDCLRLLLKSTVPKAFLPCFDENATEIDLLLKFMSRLQHRSYALFDAVIFMLDAFVSAFQRACTLMGMRWLLVRDLHMFYLTCDGKDTHVVMPLLQTAVENCWEKTTEIKQRPTFQCAEISRCGFIVYARFFLSSGLSQSKEAHWTVTASKYLSACIRTNKTGLCFASITVYFQDMMCVFIANRYNVSYWIEEFDPNDYCLEYHEGLLDCSRYTAVMSEDGQLVRQARGIALTDKINFSYYILVTLRVLRRWVESKFEDVEQTQFIRWENRMLCEHIHLLHLN.

It belongs to the herpesviridae HEPA family. As to quaternary structure, associates with the primase and the helicase to form the helicase-primase complex. Interacts with the origin-binding protein. Interacts with the polymerase catalytic subunit.

The protein resides in the host nucleus. Component of the helicase/primase complex. Unwinds the DNA at the replication forks and generates single-stranded DNA for both leading and lagging strand synthesis. The primase synthesizes short RNA primers on the lagging strand that the polymerase presumably elongates using dNTPs. The primase-associated factor has no known catalytic activity in the complex and may serve to facilitate the formation of the replisome by directly interacting with the origin-binding protein and the polymerase. The polypeptide is DNA helicase/primase complex-associated protein (U74) (Human herpesvirus 6A (strain Uganda-1102) (HHV-6 variant A)).